The chain runs to 346 residues: D-alanine--D-alanine ligase (346 aa).

The ATP-grasp domain maps to 134 to 340 (KFLAESLGVK…IDYTYIHSIQ (207 aa)). 161–212 (EYPVIIKPVRLGSSIGVSIVKSEAELDYALDVAFEFDNDVIVEPFIDGVKEF) serves as a coordination point for ATP. Positions 284, 296, and 298 each coordinate Mg(2+).

Belongs to the D-alanine--D-alanine ligase family. Mg(2+) serves as cofactor. The cofactor is Mn(2+).

The protein resides in the cytoplasm. It carries out the reaction 2 D-alanine + ATP = D-alanyl-D-alanine + ADP + phosphate + H(+). The protein operates within cell wall biogenesis; peptidoglycan biosynthesis. Cell wall formation. The protein is D-alanine--D-alanine ligase of Sulfurovum sp. (strain NBC37-1).